Reading from the N-terminus, the 362-residue chain is IGEPINERGPIKTKQFAPIHAEAPDFLNMSVDQEILVTGIKVVDLLAPYAKGGKIGLFGGAVVGKTVLIMELINNVAKAHGGYSVFAGVGERTREGNDLYHEMIESGVINLKDATSKVALVYGQMNEPPGARARVALTGLTVAEYFRDQEGQDVLLFIDNIFRFTQAGSEVSALLGRIPSAVGYQPTLATDMGTMQERITTTKKGSITSVQAIYVPADDLTDPAPATTFAHLDATTVLSRAIAELGIYPAVDPLDSTSRIMDPNIVGNEHYDVARGVQKILQDYKSLQDIIAILGMDELSEEDKLTVSRARKIQRFLSQPFQVAEVFTGHMGKLVPLKETIKGFQQMLAGDYDHLPEQAYYI.

Position 14 is an N6-acetyllysine; alternate (K14). An N6-succinyllysine; alternate modification is found at K14. K51 is subject to N6-acetyllysine. Residues V62, V63, G64, K65, T66, and V67 each contribute to the ADP site. Residue V62 coordinates ATP. Phosphate contacts are provided by V62, V63, G64, K65, and T66. G64, K65, T66, and V67 together coordinate ATP. T66 contacts Mg(2+). Position 91 (E91) interacts with Mg(2+). N6-acetyllysine; alternate occurs at positions 112 and 117. Residues K112 and K117 each carry the N6-succinyllysine; alternate modification. Position 165 is a phosphothreonine (T165). N6-acetyllysine is present on K279. Phosphoserine is present on S286. Residues K333 and K338 each carry the N6-acetyllysine modification.

Belongs to the ATPase alpha/beta chains family. In terms of assembly, homotrimer. Component of the ATP synthase complex composed at least of ATP5F1A/subunit alpha, ATP5F1B/subunit beta, ATP5MC1/subunit c (homooctomer), MT-ATP6/subunit a, MT-ATP8/subunit 8, ATP5ME/subunit e, ATP5MF/subunit f, ATP5MG/subunit g, ATP5MK/subunit k, ATP5MJ/subunit j, ATP5F1C/subunit gamma, ATP5F1D/subunit delta, ATP5F1E/subunit epsilon, ATP5PF/subunit F6, ATP5PB/subunit b, ATP5PD/subunit d, ATP5PO/subunit OSCP. ATP synthase complex consists of a soluble F(1) head domain (subunits alpha(3) and beta(3)) - the catalytic core - and a membrane F(0) domain - the membrane proton channel (subunits c, a, 8, e, f, g, k and j). These two domains are linked by a central stalk (subunits gamma, delta, and epsilon) rotating inside the F1 region and a stationary peripheral stalk (subunits F6, b, d, and OSCP). Interacts with PPIF. Interacts with BCL2L1 isoform BCL-X(L); the interaction mediates the association of BCL2L1 isoform BCL-X(L) with the mitochondrial membrane F(1)F(0) ATP synthase and enhances neurons metabolic efficiency. Interacts with CLN5 and PPT1. Interacts with S100A1; this interaction increases F1-ATPase activity. Interacts with MTLN. Interacts with TTC5/STRAP; the interaction results in decreased mitochondrial ATP production.

Its subcellular location is the mitochondrion inner membrane. It catalyses the reaction ATP + H2O + 4 H(+)(in) = ADP + phosphate + 5 H(+)(out). Functionally, catalytic subunit beta, of the mitochondrial membrane ATP synthase complex (F(1)F(0) ATP synthase or Complex V) that produces ATP from ADP in the presence of a proton gradient across the membrane which is generated by electron transport complexes of the respiratory chain. ATP synthase complex consist of a soluble F(1) head domain - the catalytic core - and a membrane F(1) domain - the membrane proton channel. These two domains are linked by a central stalk rotating inside the F(1) region and a stationary peripheral stalk. During catalysis, ATP synthesis in the catalytic domain of F(1) is coupled via a rotary mechanism of the central stalk subunits to proton translocation. In vivo, can only synthesize ATP although its ATP hydrolase activity can be activated artificially in vitro. With the subunit alpha (ATP5F1A), forms the catalytic core in the F(1) domain. The sequence is that of ATP synthase F(1) complex catalytic subunit beta, mitochondrial from Mesocricetus auratus (Golden hamster).